The sequence spans 21 residues: Histone H2B 1 (21 aa).

Residues 1 to 21 (MPDPAKTAPKKGSKKAVTKXA) form a disordered region. 2 positions are modified to N6-acetyllysine: Lys-6 and Lys-11. Over residues 8-21 (APKKGSKKAVTKXA) the composition is skewed to basic residues. Residue Ser-13 is modified to Phosphoserine. N6-acetyllysine is present on residues Lys-14 and Lys-19. Residue Lys-19 forms a Glycyl lysine isopeptide (Lys-Gly) (interchain with G-Cter in ubiquitin) linkage.

It belongs to the histone H2B family. As to quaternary structure, the nucleosome is a histone octamer containing two molecules each of H2A, H2B, H3 and H4 assembled in one H3-H4 heterotetramer and two H2A-H2B heterodimers. The octamer wraps approximately 147 bp of DNA. In terms of processing, monoubiquitination at the C-terminal Lys gives a specific tag for epigenetic transcriptional activation and is also prerequisite for histone H3 'Lys-4' and 'Lys-79' methylation. Phosphorylated during apoptosis; which facilitates apoptotic chromatin condensation.

It is found in the nucleus. It localises to the chromosome. Core component of nucleosome. Nucleosomes wrap and compact DNA into chromatin, limiting DNA accessibility to the cellular machineries which require DNA as a template. Histones thereby play a central role in transcription regulation, DNA repair, DNA replication and chromosomal stability. DNA accessibility is regulated via a complex set of post-translational modifications of histones, also called histone code, and nucleosome remodeling. Functionally, has broad-spectrum antimicrobial and antibacterial activity. It is important in the antimicrobial defenses of fish skin and possesses strong activity against saprolegnia, the most common fungal infection in fish. It is also inhibitory to fish bacterial pathogens, such as aeromonas hydrophila, vibrio alginolyticus and E.coli D31. This chain is Histone H2B 1, found in Ictalurus punctatus (Channel catfish).